The following is a 210-amino-acid chain: Cytochrome c biogenesis ATP-binding export protein CcmA (210 aa).

Residues 3–205 enclose the ABC transporter domain; the sequence is LHLQAAGLAC…KPSGYRELNL (203 aa). ATP is bound at residue 37–44; it reads GPNGSGKT.

This sequence belongs to the ABC transporter superfamily. CcmA exporter (TC 3.A.1.107) family. In terms of assembly, the complex is composed of two ATP-binding proteins (CcmA) and two transmembrane proteins (CcmB).

Its subcellular location is the cell inner membrane. It carries out the reaction heme b(in) + ATP + H2O = heme b(out) + ADP + phosphate + H(+). Part of the ABC transporter complex CcmAB involved in the biogenesis of c-type cytochromes; once thought to export heme, this seems not to be the case, but its exact role is uncertain. Responsible for energy coupling to the transport system. The sequence is that of Cytochrome c biogenesis ATP-binding export protein CcmA from Pseudomonas putida (strain GB-1).